The primary structure comprises 277 residues: Small ribosomal subunit protein uS2 (277 aa).

Residues 247–277 (LSAFESSQDDESDEENREEDLLAKKFDGEAN) form a disordered region. A compositionally biased stretch (acidic residues) spans 253–264 (SQDDESDEENRE). Positions 265–277 (EDLLAKKFDGEAN) are enriched in basic and acidic residues.

It belongs to the universal ribosomal protein uS2 family.

This Chlamydia pneumoniae (Chlamydophila pneumoniae) protein is Small ribosomal subunit protein uS2 (rpsB).